We begin with the raw amino-acid sequence, 278 residues long: UPF0276 protein Ssed_2857 (278 aa).

The protein belongs to the UPF0276 family.

The polypeptide is UPF0276 protein Ssed_2857 (Shewanella sediminis (strain HAW-EB3)).